The primary structure comprises 89 residues: Small ribosomal subunit protein uS15 (89 aa).

This sequence belongs to the universal ribosomal protein uS15 family. In terms of assembly, part of the 30S ribosomal subunit. Forms a bridge to the 50S subunit in the 70S ribosome, contacting the 23S rRNA.

Its function is as follows. One of the primary rRNA binding proteins, it binds directly to 16S rRNA where it helps nucleate assembly of the platform of the 30S subunit by binding and bridging several RNA helices of the 16S rRNA. Forms an intersubunit bridge (bridge B4) with the 23S rRNA of the 50S subunit in the ribosome. This is Small ribosomal subunit protein uS15 from Synechococcus elongatus (strain ATCC 33912 / PCC 7942 / FACHB-805) (Anacystis nidulans R2).